A 515-amino-acid chain; its full sequence is Protein DETOXIFICATION 32 (515 aa).

Residues 1–26 (METLNVDHEDTISSEQEHRAHTKSDT) are compositionally biased toward basic and acidic residues. The interval 1 to 30 (METLNVDHEDTISSEQEHRAHTKSDTDMPP) is disordered. The next 12 helical transmembrane spans lie at 48 to 68 (LWWLAGPAIFTSFCQYSLGAV), 90 to 110 (VISGFSVGIMLGMGSALATLC), 131 to 151 (IILNSCALLLCLFYVFATPLL), 167 to 187 (FSLWMIPQLFAYAVNFATAKF), 194 to 214 (VIAMAVIAATVLLQHTLLSWL), 225 to 245 (GGAVVLNMSWWLIDVTQIVYI), 276 to 296 (AVMVCLEVWYFMALILFAGYL), 303 to 323 (VAALSICMNILGWPIMVAFGF), 347 to 367 (LIVAMITSVSIGIVISVTLIV), 392 to 412 (LLALTIVINNIQPVLSGVAVG), 418 to 438 (IVAYVNIGCYYLCGIPIGLVL), and 448 to 468 (GIWTGMLTGTVVQTSVLLFII). The span at 488–497 (GDQSNKREEI) shows a compositional bias: basic and acidic residues. A disordered region spans residues 488–515 (GDQSNKREEIDLCEEDENNSNGENNHRK). Low complexity predominate over residues 506–515 (NSNGENNHRK).

The protein belongs to the multi antimicrobial extrusion (MATE) (TC 2.A.66.1) family.

The protein localises to the membrane. The protein is Protein DETOXIFICATION 32 of Arabidopsis thaliana (Mouse-ear cress).